The chain runs to 493 residues: Aspartate-semialdehyde dehydrogenase (Non-phosphorylating) (493 aa).

Residues Trp-160 to Asn-161, Lys-184 to His-187, and Gly-237 to Ser-238 contribute to the NADP(+) site. Glu-259 functions as the Proton acceptor in the catalytic mechanism. Residue Leu-260 participates in NADP(+) binding. The active-site Nucleophile is Cys-293. An NADP(+)-binding site is contributed by Glu-390.

It belongs to the aldehyde dehydrogenase family.

It is found in the cytoplasm. It carries out the reaction L-aspartate 4-semialdehyde + NAD(+) + H2O = L-aspartate + NADH + 2 H(+). In terms of biological role, involved in the degradation of ectoine, which allows H.elongata to utilize ectoine as both a carbon and a nitrogen source for growth. Probably catalyzes the NAD(+)-dependent oxidation of L-aspartate-semialdehyde to L-aspartate. The chain is Aspartate-semialdehyde dehydrogenase (Non-phosphorylating) from Halomonas elongata (strain ATCC 33173 / DSM 2581 / NBRC 15536 / NCIMB 2198 / 1H9).